The chain runs to 533 residues: Beta-xylosidase (533 aa).

D14 functions as the Proton acceptor in the catalytic mechanism. Catalysis depends on E186, which acts as the Proton donor.

Belongs to the glycosyl hydrolase 43 family. Homodimer.

The protein resides in the cell membrane. The catalysed reaction is Hydrolysis of (1-&gt;4)-beta-D-xylans, to remove successive D-xylose residues from the non-reducing termini.. This Bacillus subtilis (strain 168) protein is Beta-xylosidase (xynB).